The following is a 249-amino-acid chain: EID1-like F-box protein 2 (249 aa).

The 53-residue stretch at 16 to 68 (HCTKGHLSEEVLFLMVQHLNWNPNVIATLSCVCKWFDDLAKRLLWKEFCRARA) folds into the F-box domain.

This is EID1-like F-box protein 2 (EDL2) from Arabidopsis thaliana (Mouse-ear cress).